Here is a 161-residue protein sequence, read N- to C-terminus: Cyclic pyranopterin monophosphate synthase (161 aa).

Substrate is bound by residues leucine 75–histidine 77 and methionine 113–glutamate 114. The active site involves aspartate 128.

Belongs to the MoaC family. As to quaternary structure, homohexamer; trimer of dimers.

The enzyme catalyses (8S)-3',8-cyclo-7,8-dihydroguanosine 5'-triphosphate = cyclic pyranopterin phosphate + diphosphate. Its pathway is cofactor biosynthesis; molybdopterin biosynthesis. Functionally, catalyzes the conversion of (8S)-3',8-cyclo-7,8-dihydroguanosine 5'-triphosphate to cyclic pyranopterin monophosphate (cPMP). The chain is Cyclic pyranopterin monophosphate synthase from Salmonella typhi.